We begin with the raw amino-acid sequence, 96 residues long: Large ribosomal subunit protein uL23 (96 aa).

This sequence belongs to the universal ribosomal protein uL23 family. As to quaternary structure, part of the 50S ribosomal subunit. Contacts protein L29, and trigger factor when it is bound to the ribosome.

In terms of biological role, one of the early assembly proteins it binds 23S rRNA. One of the proteins that surrounds the polypeptide exit tunnel on the outside of the ribosome. Forms the main docking site for trigger factor binding to the ribosome. This is Large ribosomal subunit protein uL23 from Bacillus cytotoxicus (strain DSM 22905 / CIP 110041 / 391-98 / NVH 391-98).